A 229-amino-acid chain; its full sequence is Uracil-DNA glycosylase (229 aa).

The active-site Proton acceptor is the Asp-64.

It belongs to the uracil-DNA glycosylase (UDG) superfamily. UNG family.

The protein localises to the cytoplasm. The catalysed reaction is Hydrolyzes single-stranded DNA or mismatched double-stranded DNA and polynucleotides, releasing free uracil.. Excises uracil residues from the DNA which can arise as a result of misincorporation of dUMP residues by DNA polymerase or due to deamination of cytosine. This chain is Uracil-DNA glycosylase, found in Escherichia coli O45:K1 (strain S88 / ExPEC).